We begin with the raw amino-acid sequence, 347 residues long: MRALGAVVTLLLWGQLFAVELGNDAMDFEDDSCPKPPEIANGYVEHLVRYRCRQFYRLRAEGDGVYTLNDEKQWVNTVAGEKLPECEAVCGKPKHPVDQVQRIIGGSMDAKGSFPWQAKMISRHGLTTGATLISDQWLLTTAKNLFLNHSETASAKDITPTLTLYVGKNQLVEIEKVVLHPNHSVVDIGLIKLKQRVLVTERVMPICLPSKDYIAPGRVGYVSGWGRNANFRFTDRLKYVMLPVADQDKCVVHYENSTVPEKKNLTSPVGVQPILNEHTFCAGLTKYQEDTCYGDAGSAFAIHDMEEDTWYAAGILSFDKSCAVAEYGVYVRATDLKDWVQETMAKN.

Positions 1 to 18 are cleaved as a signal peptide; that stretch reads MRALGAVVTLLLWGQLFA. The region spanning 31-88 is the Sushi domain; sequence DSCPKPPEIANGYVEHLVRYRCRQFYRLRAEGDGVYTLNDEKQWVNTVAGEKLPECEA. Intrachain disulfides connect Cys52/Cys86, Cys90/Cys207, Cys250/Cys281, and Cys292/Cys322. A Peptidase S1 domain is found at 103–345; sequence IIGGSMDAKG…LKDWVQETMA (243 aa). Asn148, Asn182, Asn256, and Asn264 each carry an N-linked (GlcNAc...) asparagine glycan. The interval 259-264 is interaction with CD163; that stretch reads VPEKKN.

The protein belongs to the peptidase S1 family. As to quaternary structure, tetramer of two alpha and two beta chains; disulfide-linked. The hemoglobin/haptoglobin complex is composed of a haptoglobin dimer bound to two hemoglobin alpha-beta dimers. Interacts with CD163. Interacts with ERGIC3. Expressed by the liver and secreted in plasma.

The protein localises to the secreted. In terms of biological role, as a result of hemolysis, hemoglobin is found to accumulate in the kidney and is secreted in the urine. Haptoglobin captures, and combines with free plasma hemoglobin to allow hepatic recycling of heme iron and to prevent kidney damage. Haptoglobin also acts as an antioxidant, has antibacterial activity and plays a role in modulating many aspects of the acute phase response. Hemoglobin/haptoglobin complexes are rapidly cleared by the macrophage CD163 scavenger receptor expressed on the surface of liver Kupfer cells through an endocytic lysosomal degradation pathway. This Mus musculus (Mouse) protein is Haptoglobin (Hp).